Consider the following 266-residue polypeptide: Lectin 7 (266 aa).

Residues 1 to 27 (MAINTSRTQILFITIISFLILAQNVNS) form the signal peptide. N121, N205, and N219 each carry an N-linked (GlcNAc...) asparagine glycan.

It belongs to the leguminous lectin family.

May be involved in arbuscular mycorrhizal (AM) symbiosis with AM fungi. In Medicago truncatula (Barrel medic), this protein is Lectin 7.